The following is a 761-amino-acid chain: Phosphoribosylformylglycinamidine synthase subunit PurL (761 aa).

The active site involves H49. ATP is bound by residues Y52 and K92. A Mg(2+)-binding site is contributed by E94. Substrate is bound by residues 95 to 98 (SHNH) and R117. H96 (proton acceptor) is an active-site residue. D118 contributes to the Mg(2+) binding site. Q241 serves as a coordination point for substrate. Position 269 (D269) interacts with Mg(2+). 318–320 (ESQ) provides a ligand contact to substrate. ATP is bound by residues N502 and G539. Mg(2+) is bound at residue N540. S542 is a binding site for substrate.

It belongs to the FGAMS family. As to quaternary structure, monomer. Part of the FGAM synthase complex composed of 1 PurL, 1 PurQ and 2 PurS subunits.

The protein localises to the cytoplasm. It catalyses the reaction N(2)-formyl-N(1)-(5-phospho-beta-D-ribosyl)glycinamide + L-glutamine + ATP + H2O = 2-formamido-N(1)-(5-O-phospho-beta-D-ribosyl)acetamidine + L-glutamate + ADP + phosphate + H(+). The protein operates within purine metabolism; IMP biosynthesis via de novo pathway; 5-amino-1-(5-phospho-D-ribosyl)imidazole from N(2)-formyl-N(1)-(5-phospho-D-ribosyl)glycinamide: step 1/2. In terms of biological role, part of the phosphoribosylformylglycinamidine synthase complex involved in the purines biosynthetic pathway. Catalyzes the ATP-dependent conversion of formylglycinamide ribonucleotide (FGAR) and glutamine to yield formylglycinamidine ribonucleotide (FGAM) and glutamate. The FGAM synthase complex is composed of three subunits. PurQ produces an ammonia molecule by converting glutamine to glutamate. PurL transfers the ammonia molecule to FGAR to form FGAM in an ATP-dependent manner. PurS interacts with PurQ and PurL and is thought to assist in the transfer of the ammonia molecule from PurQ to PurL. This chain is Phosphoribosylformylglycinamidine synthase subunit PurL, found in Chlorobium chlorochromatii (strain CaD3).